A 471-amino-acid polypeptide reads, in one-letter code: Amidophosphoribosyltransferase (471 aa).

C2 (nucleophile) is an active-site residue. Residues 2–224 enclose the Glutamine amidotransferase type-2 domain; it reads CGIFGIYSYE…PGEIIEIKDG (223 aa). C255 contributes to the [4Fe-4S] cluster binding site. Mg(2+)-binding residues include S302, D364, and D365. The [4Fe-4S] cluster site is built by C401, C450, and C453.

It in the C-terminal section; belongs to the purine/pyrimidine phosphoribosyltransferase family. Requires Mg(2+) as cofactor. [4Fe-4S] cluster is required as a cofactor.

The catalysed reaction is 5-phospho-beta-D-ribosylamine + L-glutamate + diphosphate = 5-phospho-alpha-D-ribose 1-diphosphate + L-glutamine + H2O. It functions in the pathway purine metabolism; IMP biosynthesis via de novo pathway; N(1)-(5-phospho-D-ribosyl)glycinamide from 5-phospho-alpha-D-ribose 1-diphosphate: step 1/2. Its function is as follows. Catalyzes the formation of phosphoribosylamine from phosphoribosylpyrophosphate (PRPP) and glutamine. The chain is Amidophosphoribosyltransferase from Methanocaldococcus jannaschii (strain ATCC 43067 / DSM 2661 / JAL-1 / JCM 10045 / NBRC 100440) (Methanococcus jannaschii).